The following is a 125-amino-acid chain: UPF0102 protein Mpop_0474 (125 aa).

This sequence belongs to the UPF0102 family.

The polypeptide is UPF0102 protein Mpop_0474 (Methylorubrum populi (strain ATCC BAA-705 / NCIMB 13946 / BJ001) (Methylobacterium populi)).